A 361-amino-acid chain; its full sequence is Mitogen-activated protein kinase 14A (361 aa).

The region spanning 25–309 is the Protein kinase domain; sequence YQNLSPVGSG…AAEALAHPYF (285 aa). Residues 31–39 and Lys-54 contribute to the ATP site; that span reads VGSGAYGTV. The active-site Proton acceptor is the Asp-151. Thr-181 carries the post-translational modification Phosphothreonine; by MAP2K6. Positions 181–183 match the TXY motif; sequence TGY. At Tyr-183 the chain carries Phosphotyrosine; by MAP2K6.

This sequence belongs to the protein kinase superfamily. CMGC Ser/Thr protein kinase family. MAP kinase subfamily. It depends on Mg(2+) as a cofactor. In terms of processing, dually phosphorylated on Thr-181 and Tyr-183, which activates the enzyme. As to expression, exclusively expressed in the ovary.

It localises to the cytoplasm. It is found in the nucleus. It catalyses the reaction L-seryl-[protein] + ATP = O-phospho-L-seryl-[protein] + ADP + H(+). The catalysed reaction is L-threonyl-[protein] + ATP = O-phospho-L-threonyl-[protein] + ADP + H(+). Its activity is regulated as follows. Activated by threonine and tyrosine phosphorylation by the dual specificity kinase, MKK6. Serine/threonine kinase which acts as an essential component of the MAP kinase signal transduction pathway. Mapk14a is one of the four p38 MAPKs which play an important role in the cascades of cellular responses evoked by extracellular stimuli such as pro-inflammatory cytokines or physical stress leading to direct activation of transcription factors. Accordingly, p38 MAPKs phosphorylate a broad range of proteins and it has been estimated that they may have approximately 200 to 300 substrates each. Some of the targets are downstream kinases which are activated through phosphorylation and further phosphorylate additional targets. This chain is Mitogen-activated protein kinase 14A (mapk14a), found in Cyprinus carpio (Common carp).